The sequence spans 167 residues: Interferon gamma (167 aa).

An N-terminal signal peptide occupies residues 1 to 23; that stretch reads MNYTSFIFAFQLCIILCSSGYYC. Q24 carries the pyrrolidone carboxylic acid modification. Residues N39 and N107 are each glycosylated (N-linked (GlcNAc...) asparagine).

It belongs to the type II (or gamma) interferon family. In terms of assembly, homodimer. Interacts with IFNGR1 (via extracellular domain); this interaction promotes IFNGR1 dimerization. As to expression, released primarily from activated T lymphocytes.

The protein localises to the secreted. Its function is as follows. Type II interferon produced by immune cells such as T-cells and NK cells that plays crucial roles in antimicrobial, antiviral, and antitumor responses by activating effector immune cells and enhancing antigen presentation. Primarily signals through the JAK-STAT pathway after interaction with its receptor IFNGR1 to affect gene regulation. Upon IFNG binding, IFNGR1 intracellular domain opens out to allow association of downstream signaling components JAK2, JAK1 and STAT1, leading to STAT1 activation, nuclear translocation and transcription of IFNG-regulated genes. Many of the induced genes are transcription factors such as IRF1 that are able to further drive regulation of a next wave of transcription. Plays a role in class I antigen presentation pathway by inducing a replacement of catalytic proteasome subunits with immunoproteasome subunits. In turn, increases the quantity, quality, and repertoire of peptides for class I MHC loading. Increases the efficiency of peptide generation also by inducing the expression of activator PA28 that associates with the proteasome and alters its proteolytic cleavage preference. Up-regulates as well MHC II complexes on the cell surface by promoting expression of several key molecules such as cathepsins B/CTSB, H/CTSH, and L/CTSL. Participates in the regulation of hematopoietic stem cells during development and under homeostatic conditions by affecting their development, quiescence, and differentiation. This Felis catus (Cat) protein is Interferon gamma (IFNG).